Consider the following 342-residue polypeptide: Mitochondrial sorting homolog (342 aa).

The Mitochondrial intermembrane portion of the chain corresponds to 1-6; it reads MTDRNE. The helical transmembrane segment at 7–25 threads the bilayer; sequence LIGVAIRVVAAAAVSFLSV. Residues 26–342 lie on the Cytoplasmic side of the membrane; sequence RYLVKYLDPN…AHLLVEETLD (317 aa). 124–131 is an ATP binding site; the sequence is GPPGCGKT.

This sequence belongs to the AAA ATPase family.

It localises to the mitochondrion outer membrane. In terms of biological role, involved in intramitochondrial sorting of proteins. This Caenorhabditis elegans protein is Mitochondrial sorting homolog (mspn-1).